We begin with the raw amino-acid sequence, 617 residues long: MQVLLARLACPVYQCFHAIKIKKNYLPLCATRWSSTSVVPRITTHYTVYPRDQDKRWEGVNMERFAEEADVVIVGAGPAGLSAAARLKQLAAQHEKDIRVCLVEKAAQIGAHTLSGACLDPRALQELFPDWKEKGAPLNTPVTEDRFGILTEKYRIPVPILPGLPMNNHGNYIVRLGHLVSWMGEQAEALGVEVYPGYAAAEVLFHEDGSVKGIATNDVGIQKDGAPKTTFERGLELHAKVTIFAEGCHGHLAKQLYRKFDLRANCEPQTYGIGLKELWVIDEKKWKPGRVDHTVGWPLDRHTYGGSFLYHLNEGEPLVALGFVVGLDYQNPYLSPFREFQRWKHHPSIQPTLEGGKRIAYGARALNEGGLQCIPKLTFPGGLLIGCSPGFMNVPKIKGTHTAMKSGILAAESIFNQLTNENLQSKTIGLDVTEYEDNLKKSWVWKELYAVRNIRPSCHSILGVYGGMIYTGIFYWIFRGMEPWTLKHKGSDSDKLKPAKDCTPIEYPKPDGQISFDLLSSVALSGTNHEHDQPAHLTLKDDSVPVNRNLSIYDGPEQRFCPAGVYEFVPVEQGDGFRLQINAQNCVHCKTCDIKDPSQNINWVVPEGGGGPAYNGM.

The transit peptide at 1–33 (MQVLLARLACPVYQCFHAIKIKKNYLPLCATRW) directs the protein to the mitochondrion. 71–85 (VVIVGAGPAGLSAAA) is an FAD binding site. Residue Lys96 is modified to N6-acetyllysine. The stretch at 109-130 (IGAHTLSGACLDPRALQELFPD) is an intramembrane region. An N6-acetyllysine mark is found at Lys132 and Lys223. A ubiquinone is bound by residues Gly305 and Gly306. Lys357 carries the N6-acetyllysine modification. The stretch at 428–447 (IGLDVTEYEDNLKKSWVWKE) is an intramembrane region. Ser551 carries the post-translational modification Phosphoserine. The [4Fe-4S] cluster site is built by Cys561, Cys586, Cys589, and Cys592. A 4Fe-4S ferredoxin-type domain is found at 577 to 606 (FRLQINAQNCVHCKTCDIKDPSQNINWVVP).

It belongs to the ETF-QO/FixC family. As to quaternary structure, monomer. The cofactor is [4Fe-4S] cluster. FAD serves as cofactor.

Its subcellular location is the mitochondrion inner membrane. The catalysed reaction is a ubiquinone + reduced [electron-transfer flavoprotein] = a ubiquinol + oxidized [electron-transfer flavoprotein] + H(+). Functionally, accepts electrons from ETF and reduces ubiquinone. This Bos taurus (Bovine) protein is Electron transfer flavoprotein-ubiquinone oxidoreductase, mitochondrial (ETFDH).